Reading from the N-terminus, the 259-residue chain is Ras-related protein Rab-34 (259 aa).

M1 is subject to N-acetylmethionine. 8 residues coordinate GTP: S62, V63, G64, K65, T66, D78, Y81, and T84. T66 is a binding site for Mg(2+). Residues 71 to 89 (RFCKDTFDKNYKATIGVDF) carry the Switch 1 motif. Residues T84 and D107 each contribute to the Mg(2+) site. A Switch 2 motif is present at residues 108–127 (TAGQERFKCIASTYYRGAQA). G110, K167, D169, and S198 together coordinate GTP. Residue S241 is modified to Phosphoserine. S-geranylgeranyl cysteine attachment occurs at residues C257 and C258.

Belongs to the small GTPase superfamily. Rab family. Interacts with RILP. The GTP-bound form interacts with REP15. It depends on Mg(2+) as a cofactor.

Its subcellular location is the cytoplasm. It localises to the golgi apparatus. The protein localises to the cytoplasmic vesicle. It is found in the phagosome. The protein resides in the phagosome membrane. Its subcellular location is the cell projection. It localises to the cilium. The protein localises to the cytoskeleton. It is found in the microtubule organizing center. The protein resides in the centrosome. Its subcellular location is the centriole. The catalysed reaction is GTP + H2O = GDP + phosphate + H(+). With respect to regulation, regulated by guanine nucleotide exchange factors (GEFs) which promote the exchange of bound GDP for free GTP. Regulated by GTPase activating proteins (GAPs) which increase the GTP hydrolysis activity. Inhibited by GDP dissociation inhibitors (GDIs). Functionally, the small GTPases Rab are key regulators of intracellular membrane trafficking, from the formation of transport vesicles to their fusion with membranes. Rabs cycle between an inactive GDP-bound form and an active GTP-bound form that is able to recruit to membranes different sets of downstream effectors directly responsible for vesicle formation, movement, tethering and fusion. RAB34 transports protein involved in the redistribution of lysosomes to the peri-Golgi region. Plays a role in the maturation of phagosomes that engulf pathogens, such as S.aureus and M.tuberculosis. Plays a role in the fusion of phagosomes with lysosomes. Involved in ciliogenesis. In particular, it is required for early steps of the intracellular cilium assembly pathway initiated by trafficking and docking of ciliary vesicles to the centrioles in the cytoplasm, followed by axoneme formation in the cytoplasm. After axoneme elongation, the centrioles migrate close to the cell surface so that ciliary vesicles can fuse with the plasma membrane to expose cilia to the extracellular space. It seems dispensable for ciliogenesis via the extracellular pathway where cilium assembly begins after migration and docking of the centriole to the plasma membrane. Also acts as a positive regulator of hedgehog signaling and regulates ciliary function. This Rattus norvegicus (Rat) protein is Ras-related protein Rab-34.